The primary structure comprises 672 residues: MEIQFNYESQEHHLLSDGENKTKIGKPASEEGITAKIEPLTEESSSLRENVLQDSEGREFCEFGDKLNEKDQNVFKRRPHNCDEYGQSFVWNTGLFRHRKTHCEKPYECDKCGKAFSVSSALVLHQRIHTGEKPYSCNWCIKSFSRSSDLIKHQRVHTGEKPYKCDECGKAFSQSSDLIIHQRIHTGEKPYQCSHCSKSFSQRSDLVKHQRIHTGEKPYTCNQCNKHFSQSSDVIKHQRIHTGEKPYKCDVCAKAFSQSSDLILHQRIHTGEKPYPCNQCSKSFSQNSDLIKHRRIHTGEKPYKCNECGKAFNQSSVLILHQRIHTGEKPYPCDQCSKTFSRLSDLINHQRIHTGEKPYPCNQCNKMFSRRSDLVKHHRIHTGEKPYECDECGKTFSQSSNLILHQRIHTGEKPYPCSDCTKSFSRRSDLVKHQRIHTGEKPYACNQCDKSFSQSSDLTKHQRVHSGEKPYHCNSCEKAFSQSSDLILHQRIHTGEKPYLCTQCSKSFSQNSDLIKHQRIHTGEKPYKCSECRKAFSQCSALTLHQRIHTGEKPNPCNECGKSFSRHSDLINHQKIHTGEKPYKCDACGKAFSTCTDLIEHQKIHAGEKPYRCVQCSRSFSQLSELTIHEEVHCGEDSQNVMNVRKPLVYTSTLFSTRDTVPGKNLMNAVDY.

Positions 1–29 (MEIQFNYESQEHHLLSDGENKTKIGKPAS) are disordered. The segment covering 9 to 22 (SQEHHLLSDGENKT) has biased composition (basic and acidic residues). A C2H2-type 1; degenerate zinc finger spans residues 80–102 (HNCDEYGQSFVWNTGLFRHRKTH). 19 C2H2-type zinc fingers span residues 107–129 (YECD…QRIH), 135–157 (YSCN…QRVH), 163–185 (YKCD…QRIH), 191–213 (YQCS…QRIH), 219–241 (YTCN…QRIH), 247–269 (YKCD…QRIH), 275–297 (YPCN…RRIH), 303–325 (YKCN…QRIH), 331–353 (YPCD…QRIH), 359–381 (YPCN…HRIH), 387–409 (YECD…QRIH), 415–437 (YPCS…QRIH), 443–465 (YACN…QRVH), 471–493 (YHCN…QRIH), 499–521 (YLCT…QRIH), 527–549 (YKCS…QRIH), 555–577 (NPCN…QKIH), 583–605 (YKCD…QKIH), and 611–633 (YRCV…EEVH).

It belongs to the krueppel C2H2-type zinc-finger protein family.

Its subcellular location is the nucleus. In terms of biological role, may be involved in transcriptional regulation. This chain is Zinc finger protein 271 (ZNF271), found in Pongo abelii (Sumatran orangutan).